A 389-amino-acid polypeptide reads, in one-letter code: tRNA-specific 2-thiouridylase MnmA (389 aa).

ATP-binding positions include 35–42 (GMSGGVDS) and Met-61. The tract at residues 121 to 123 (NPD) is interaction with target base in tRNA. Cys-126 serves as the catalytic Nucleophile. An intrachain disulfide couples Cys-126 to Cys-223. An ATP-binding site is contributed by Gly-151. Residues 173–175 (KDQ) are interaction with tRNA. Cys-223 acts as the Cysteine persulfide intermediate in catalysis. Residues 335–336 (RY) form an interaction with tRNA region.

The protein belongs to the MnmA/TRMU family.

It localises to the cytoplasm. The catalysed reaction is S-sulfanyl-L-cysteinyl-[protein] + uridine(34) in tRNA + AH2 + ATP = 2-thiouridine(34) in tRNA + L-cysteinyl-[protein] + A + AMP + diphosphate + H(+). In terms of biological role, catalyzes the 2-thiolation of uridine at the wobble position (U34) of tRNA, leading to the formation of s(2)U34. The sequence is that of tRNA-specific 2-thiouridylase MnmA from Actinobacillus pleuropneumoniae serotype 3 (strain JL03).